Consider the following 2302-residue polypeptide: Phosphatidylinositol phosphatase PTPRQ (2302 aa).

Residues 1–18 (MMDFHFSFLFLLIGTSES) form the signal peptide. Residues 19–1908 (QVDVSSSFDG…GEGLSERTVE (1890 aa)) are Extracellular-facing. Asparagine 54 carries an N-linked (GlcNAc...) asparagine glycan. 17 consecutive Fibronectin type-III domains span residues 60-155 (PPVF…TAES), 159-254 (KVVN…SSST), 310-398 (PPQN…PPDV), 401-501 (AVFD…PHND), 474-566 (GFYE…TVRT), 570-665 (VPSS…TPED), 670-759 (SPQD…TSET), 764-854 (APEN…TEED), 859-948 (PPQN…TPEG), 953-1053 (PPND…TDQD), 1058-1151 (PVGN…TEED), 1156-1243 (PPII…TDES), 1248-1341 (PPQN…TQES), 1345-1431 (AVRN…LPET), 1435-1539 (APTN…TLPG), 1544-1642 (PPEN…TLES), and 1647-1748 (PPNN…IKAP). N-linked (GlcNAc...) asparagine glycans are attached at residues asparagine 162, asparagine 169, asparagine 318, asparagine 354, and asparagine 389. N-linked (GlcNAc...) asparagine glycans are attached at residues asparagine 733 and asparagine 746. N-linked (GlcNAc...) asparagine glycans are attached at residues asparagine 904, asparagine 998, asparagine 1010, and asparagine 1040. 2 N-linked (GlcNAc...) asparagine glycosylation sites follow: asparagine 1251 and asparagine 1256. An N-linked (GlcNAc...) asparagine glycan is attached at asparagine 1805. Residues 1909-1929 (IILSVTLCILSIILLGTAIFA) traverse the membrane as a helical segment. At 1930 to 2302 (FVRIRQKQKE…VELEWEETTM (373 aa)) the chain is on the cytoplasmic side. The Tyrosine-protein phosphatase domain maps to 2006-2262 (FQEEFSELPK…IFLHQCILDL (257 aa)). The active-site Phosphocysteine intermediate is the cysteine 2203.

Belongs to the protein-tyrosine phosphatase family. Receptor class 2A subfamily. As to quaternary structure, interacts with TPRN. TPRN, CLIC5 and PTPQR form concentric rings at the base of stereocilia and may form a complex.

It localises to the cell projection. Its subcellular location is the stereocilium. The protein resides in the apical cell membrane. It is found in the basal cell membrane. It carries out the reaction a 1,2-diacyl-sn-glycero-3-phospho-(1D-myo-inositol-3,4,5-trisphosphate) + H2O = a 1,2-diacyl-sn-glycero-3-phospho-(1D-myo-inositol-4,5-bisphosphate) + phosphate. It catalyses the reaction a 1,2-diacyl-sn-glycero-3-phospho-(1D-myo-inositol-3,4,5-trisphosphate) + H2O = a 1,2-diacyl-sn-glycero-3-phospho-(1D-myo-inositol-3,4-bisphosphate) + phosphate. The enzyme catalyses a 1,2-diacyl-sn-glycero-3-phospho-(1D-myo-inositol-3,5-bisphosphate) + H2O = a 1,2-diacyl-sn-glycero-3-phospho-(1D-myo-inositol-5-phosphate) + phosphate. The catalysed reaction is a 1,2-diacyl-sn-glycero-3-phospho-(1D-myo-inositol-3,5-bisphosphate) + H2O = a 1,2-diacyl-sn-glycero-3-phospho-(1D-myo-inositol-3-phosphate) + phosphate. It carries out the reaction a 1,2-diacyl-sn-glycero-3-phospho-(1D-myo-inositol-4,5-bisphosphate) + H2O = a 1,2-diacyl-sn-glycero-3-phospho-(1D-myo-inositol 4-phosphate) + phosphate. Dephosphorylates phosphatidylinositol phosphates, such as phosphatidylinositol 3,4,5-trisphosphate (PIP3) and phosphatidylinositol 3,5-diphosphates, with preference for PIP3. Phosphate can be hydrolyzed from the D3 and D5 positions in the inositol ring. Has low tyrosine-protein phosphatase activity in vitro; however, the relevance of such activity in vivo is unclear. Plays an important role in adipogenesis of mesenchymal stem cells (MSCs). Regulates the phosphorylation state of AKT1 by regulating the levels of PIP3 level in MSCs and preadipocyte cells. Required for hair bundle maturation, a process that enables hair cells to detect and transmit sound and balance signals effectively, therefore affecting auditory function. May act by regulating the level of phosphatidylinositol 4,5-bisphosphate (PIP2) level in the basal region of hair bundles. This Rattus norvegicus (Rat) protein is Phosphatidylinositol phosphatase PTPRQ (Ptprq).